A 355-amino-acid chain; its full sequence is Probable low-specificity L-threonine aldolase 2 (355 aa).

Lys-211 carries the post-translational modification N6-(pyridoxal phosphate)lysine.

The protein belongs to the threonine aldolase family. Requires pyridoxal 5'-phosphate as cofactor. As to expression, expressed in roots, leaf vasculature and flowers.

It catalyses the reaction L-threonine = acetaldehyde + glycine. It carries out the reaction L-allo-threonine = acetaldehyde + glycine. It participates in amino-acid degradation; L-threonine degradation via aldolase pathway; acetaldehyde and glycine from L-threonine: step 1/1. Functionally, threonine aldolase involved in threonine degradation to glycine. May play a role in the removal of L-allo-threonine. The sequence is that of Probable low-specificity L-threonine aldolase 2 (THA2) from Arabidopsis thaliana (Mouse-ear cress).